The sequence spans 462 residues: Cysteine proteinase RD21A (462 aa).

Residues 1–21 form the signal peptide; it reads MGFLKPTMAILFLAMVAVSSA. Positions 22–136 are cleaved as a propeptide — activation peptide; sequence VDMSIISYDE…LRYEARVGDE (115 aa). An N-linked (GlcNAc...) asparagine glycan is attached at Asn90. 5 disulfide bridges follow: Cys158/Cys200, Cys192/Cys233, Cys291/Cys342, Cys375/Cys387, and Cys381/Cys402. Cys161 is an active-site residue. Residues His297 and Asn317 contribute to the active site. Residues 353 to 462 constitute a propeptide, removed in mature form; the sequence is KNGENPPNPG…FWSQGRKNIA (110 aa). The N-linked (GlcNAc...) asparagine glycan is linked to Asn414.

The protein belongs to the peptidase C1 family. In terms of assembly, interacts with SERPIN1. Interacts with PRN2. Interacts with WSCP. Interacts with TZF4, TZF5 and TZF6.

The protein localises to the vacuole. It is found in the golgi apparatus. The protein resides in the cytoplasm. Its subcellular location is the stress granule. It localises to the P-body. Its activity is regulated as follows. Inhibited by the cysteine protease inhibitor E64 (L-trans-epoxysuccinyl-leucylamide-(4-guanido)-butane). Its function is as follows. Cysteine protease that plays a role in immunity, senescence, and biotic and abiotic stresses. Involved in immunity against the necrotrophic fungal pathogen Botrytis cinerea. Involved in elicitor-stimulated programmed cell death (PCD). During infection by the necrotrophic fungal pathogen Botrytis cinerea, functions as a PCD-promoting protease that is released from the ER body or vacuole to the cytoplasm. Accumulates in endoplasmic reticulum-derived bodies in epidermal cells and may participate in cell death in stressed or injured cells. Involved in water stress-induced cell death through its protease activity that is released to the cytoplasm after vacuolar collapse. Possesses protease activity in vitro and is involved in cell death in the transmitting tract and septum epidermis during flower development. Possesses peptide ligase activity. Can ligate peptides to unmodified N-termini of acceptor proteins. Probably ligates through a thioester intermediate. The polypeptide is Cysteine proteinase RD21A (Arabidopsis thaliana (Mouse-ear cress)).